Here is a 473-residue protein sequence, read N- to C-terminus: Dolichyl-diphosphooligosaccharide--protein glycosyltransferase subunit 1B (473 aa).

Positions methionine 1 to serine 27 are cleaved as a signal peptide. Topologically, residues proline 28 to proline 439 are lumenal. N-linked (GlcNAc...) asparagine glycosylation is found at asparagine 307 and asparagine 361. Residues isoleucine 440–cysteine 460 form a helical membrane-spanning segment. Residues isoleucine 461–serine 473 lie on the Cytoplasmic side of the membrane.

This sequence belongs to the OST1 family. Component of the oligosaccharyltransferase (OST) complex.

The protein resides in the endoplasmic reticulum membrane. The protein operates within protein modification; protein glycosylation. Functionally, subunit of the oligosaccharyl transferase (OST) complex that catalyzes the initial transfer of a defined glycan (Glc(3)Man(9)GlcNAc(2) in eukaryotes) from the lipid carrier dolichol-pyrophosphate to an asparagine residue within an Asn-X-Ser/Thr consensus motif in nascent polypeptide chains, the first step in protein N-glycosylation. N-glycosylation occurs cotranslationally and the complex associates with the Sec61 complex at the channel-forming translocon complex that mediates protein translocation across the endoplasmic reticulum (ER). All subunits are required for a maximal enzyme activity. The polypeptide is Dolichyl-diphosphooligosaccharide--protein glycosyltransferase subunit 1B (OST1B) (Oryza sativa subsp. japonica (Rice)).